A 146-amino-acid polypeptide reads, in one-letter code: Putative actin-depolymerizing factor 8 (146 aa).

One can recognise an ADF-H domain in the interval 14-144 (PAWIEVPEKS…DLEVLRGRAN (131 aa)).

Belongs to the actin-binding proteins ADF family.

Functionally, actin-depolymerizing protein. Severs actin filaments (F-actin) and binds to actin monomers. The sequence is that of Putative actin-depolymerizing factor 8 (ADF8) from Oryza sativa subsp. japonica (Rice).